The chain runs to 864 residues: MEPGTIPSPVSAPVAAPVTPSAVAAPVQVVSPAAVAPAPAAPIAVTPVAPPPTLASVQPATVTIPAPAPIAAASVAPVASVAPPVVAAPTPPAASPVSTPPVAVAQIPVAVSAPVAPPVAATPTPVAPIPVAAPVIATPPVAASAPTPAAVTPVVSPVIATPPVVPANTTVPVAAPVAAVPAAVPVVAPVLAPAVAPAVAPVVAETPAPPPVAEIPVATIPECVAPLIPEVSVVATKPLAAAEPVVVAPPATETPVVAPAAASPHVSVAPAVETAVVAPVSASTEPPVAAATLTTAPETPALAPVVAESQVAANTVVATPPTPAPEPETIAPPVVAETPEVASVAVAETTPPVVPPVAAESIPAPVVATTPVPATLAVTDPDVTASAVPELPPVIAPSPVPSAVAETPVDLAPPVLPPVAAEPVPAVVAEETPETPAPASAPVTIAALDIPEVAPVIAAPSDAPAEAPSAAAPIVSTPPTTASVPETTAPPAAVPTEPIDVSVLSEAAIETPVAPPVEVTTEVAVADVAPPEAAADLIIEPVEPPAPIPDLLEQTTSVPAVEAAESTSSPIPETSLPPPNEAVASPEVAVAPITAPEPIPEPEPSLATPTEPIPVEAPVVIQEAVDAVEVPVTETSTSIPETTVEYPVAEKVLDPAITEAPVTTQEPDVANINDGAPATEITTPAVEIVTAAAEVSDTAIPLIDPPVPQEIAVAEIPETETKPAEVIVEQSTIPIEAPVPEVSKYAEPVISEAPAAEVPITAGDNPDNTSVGISEVVPTIAEKAVEEVPTSEIPEQSSSPSDSVPVAKITPLLRDLQTTDVSLLAIAATLDAIGEKLKDQKARNQQVMDRLCEIEKILGPPKSN.

The segment at 816–858 is leucine-zipper; sequence LQTTDVSLLAIAATLDAIGEKLKDQKARNQQVMDRLCEIEKIL.

In terms of assembly, homodimer. In terms of tissue distribution, soma and axons of photoreceptor cells of compound eyes and ocelli.

It is found in the cytoplasm. Plays important roles in both rhabdomere development and in photoreceptor cell survival. Might function as a calcium-sequestering 'sponge' to regulate the amount of free cytoplasmic calcium. It binds 0.3 mole of Ca(2+) per mole of protein. The sequence is that of Calphotin (Cpn) from Drosophila melanogaster (Fruit fly).